Reading from the N-terminus, the 295-residue chain is Shikimate dehydrogenase (NADP(+)) (295 aa).

Shikimate-binding positions include 20 to 22 and T68; that span reads SWS. Residue K72 is the Proton acceptor of the active site. 2 residues coordinate shikimate: N93 and D108. NADP(+) is bound by residues 132–136 and M234; that span reads GNGGA. Y236 provides a ligand contact to shikimate. An NADP(+)-binding site is contributed by G257.

The protein belongs to the shikimate dehydrogenase family. Homodimer.

It catalyses the reaction shikimate + NADP(+) = 3-dehydroshikimate + NADPH + H(+). It participates in metabolic intermediate biosynthesis; chorismate biosynthesis; chorismate from D-erythrose 4-phosphate and phosphoenolpyruvate: step 4/7. Functionally, involved in the biosynthesis of the chorismate, which leads to the biosynthesis of aromatic amino acids. Catalyzes the reversible NADPH linked reduction of 3-dehydroshikimate (DHSA) to yield shikimate (SA). This chain is Shikimate dehydrogenase (NADP(+)), found in Chlorobaculum tepidum (strain ATCC 49652 / DSM 12025 / NBRC 103806 / TLS) (Chlorobium tepidum).